A 465-amino-acid polypeptide reads, in one-letter code: Ribulose bisphosphate carboxylase large chain (465 aa).

The residue at position 4 (Lys4) is an N6,N6,N6-trimethyllysine. Substrate is bound by residues Asn113 and Thr163. Catalysis depends on Lys165, which acts as the Proton acceptor. Lys167 contributes to the substrate binding site. Mg(2+) is bound by residues Lys191, Asp193, and Glu194. Residue Lys191 is modified to N6-carboxylysine. His284 (proton acceptor) is an active-site residue. The substrate site is built by Arg285, His317, and Ser369.

The protein belongs to the RuBisCO large chain family. Type I subfamily. In terms of assembly, heterohexadecamer of 8 large chains and 8 small chains; disulfide-linked. The disulfide link is formed within the large subunit homodimers. Mg(2+) is required as a cofactor. The disulfide bond which can form in the large chain dimeric partners within the hexadecamer appears to be associated with oxidative stress and protein turnover.

Its subcellular location is the plastid. The protein resides in the chloroplast. It carries out the reaction 2 (2R)-3-phosphoglycerate + 2 H(+) = D-ribulose 1,5-bisphosphate + CO2 + H2O. The enzyme catalyses D-ribulose 1,5-bisphosphate + O2 = 2-phosphoglycolate + (2R)-3-phosphoglycerate + 2 H(+). Its function is as follows. RuBisCO catalyzes two reactions: the carboxylation of D-ribulose 1,5-bisphosphate, the primary event in carbon dioxide fixation, as well as the oxidative fragmentation of the pentose substrate in the photorespiration process. Both reactions occur simultaneously and in competition at the same active site. This is Ribulose bisphosphate carboxylase large chain from Bursera inaguensis (Elaphrium inaguense).